A 137-amino-acid chain; its full sequence is Small ribosomal subunit protein uS12 (137 aa).

Positions 1 to 57 are disordered; it reads MPTINQLIRKGRKSKGSKSNSPALNFGYNSYKKVQTNNSAPQKRGVATRVGTMTPKK. Polar residues predominate over residues 32-41; it reads KKVQTNNSAP. At Asp-102 the chain carries 3-methylthioaspartic acid.

This sequence belongs to the universal ribosomal protein uS12 family. Part of the 30S ribosomal subunit. Contacts proteins S8 and S17. May interact with IF1 in the 30S initiation complex.

Functionally, with S4 and S5 plays an important role in translational accuracy. In terms of biological role, interacts with and stabilizes bases of the 16S rRNA that are involved in tRNA selection in the A site and with the mRNA backbone. Located at the interface of the 30S and 50S subunits, it traverses the body of the 30S subunit contacting proteins on the other side and probably holding the rRNA structure together. The combined cluster of proteins S8, S12 and S17 appears to hold together the shoulder and platform of the 30S subunit. In Ligilactobacillus salivarius (strain UCC118) (Lactobacillus salivarius), this protein is Small ribosomal subunit protein uS12.